Reading from the N-terminus, the 292-residue chain is MKDRENDGNLESRIFVGGLSWDVTERQLESTFDRYGKITECQIMVGRDTGRPRGFGFITFTDRRGADDAIKHMHGRELGNKVISVNKAEPKVGGEDVDQLKKGGGYSSRGKGTEDECFKCRRPGHWARDCPSTGDDRERFRVPLAMRSRIGDIDGHRDRYGDRDLEREREREREFDRYMDGRRDRDGGRYSYRDRFDSGDKYEPRDHYPFERYAPPGDRFVSDRYGMPEHHLENEYRGRERSYDRDRYARDTSDRYGDMGPIRDEGRPYRSRPGPYDRPSRPGGRPSSYERW.

The 79-residue stretch at 12-90 (SRIFVGGLSW…KVISVNKAEP (79 aa)) folds into the RRM domain. Residue serine 20 is modified to Phosphoserine. A disordered region spans residues 93-114 (GGEDVDQLKKGGGYSSRGKGTE). The CCHC-type zinc-finger motif lies at 117-132 (CFKCRRPGHWARDCPS). 2 stretches are compositionally biased toward basic and acidic residues: residues 180–210 (DGRR…HYPF) and 220–268 (FVSD…EGRP). The segment at 180–292 (DGRRDRDGGR…GGRPSSYERW (113 aa)) is disordered.

Expressed in roots, rosette and cauline leaves, stems, floral buds and flowers.

The protein resides in the nucleus. Binds RNA and DNA sequences non-specifically. May be involved in tolerance to cold stress. In Arabidopsis thaliana (Mouse-ear cress), this protein is Glycine-rich RNA-binding protein RZ1B.